The chain runs to 140 residues: Oleosin Cor a 13 (140 aa).

2 helical membrane passes run 31–51 (GSLL…LTLA) and 75–95 (GFLA…WIYR).

Belongs to the oleosin family. In terms of tissue distribution, expressed in seeds.

The protein resides in the lipid droplet. It localises to the membrane. May have a structural role to stabilize the lipid body during desiccation of the seed by preventing coalescence of the oil. Probably interacts with both lipid and phospholipid moieties of lipid bodies. May also provide recognition signals for specific lipase anchorage in lipolysis during seedling growth. In Corylus avellana (European hazel), this protein is Oleosin Cor a 13.